The following is a 29-amino-acid chain: DEQTGSKGPNENLPSQKDLXAKASXLTEV.

Residues 1-15 show a composition bias toward polar residues; that stretch reads DEQTGSKGPNENLPS. The tract at residues 1 to 29 is disordered; sequence DEQTGSKGPNENLPSQKDLXAKASXLTEV.

It localises to the secreted. The protein resides in the nematocyst. Its subcellular location is the target cell membrane. In terms of biological role, pore-forming toxin that lyses bovine erythrocytes at nanomolar concentrations. Is devoid of enzymatic activity. Binds to monolayers and efficiently permeabilizes small lipid vesicles composed of sphingomyelin and cholesterol. The cytolytic activity is not prevented by cholesterol or sphingomyelin. The protein is Cytolysin Uc-1 of Urticina crassicornis (Mottled anemone).